We begin with the raw amino-acid sequence, 293 residues long: Ribosomal protein L11 methyltransferase (293 aa).

T145, G166, D188, and N230 together coordinate S-adenosyl-L-methionine.

It belongs to the methyltransferase superfamily. PrmA family.

Its subcellular location is the cytoplasm. The catalysed reaction is L-lysyl-[protein] + 3 S-adenosyl-L-methionine = N(6),N(6),N(6)-trimethyl-L-lysyl-[protein] + 3 S-adenosyl-L-homocysteine + 3 H(+). In terms of biological role, methylates ribosomal protein L11. This Pasteurella multocida (strain Pm70) protein is Ribosomal protein L11 methyltransferase.